Reading from the N-terminus, the 213-residue chain is Phosphatidylserine decarboxylase proenzyme (213 aa).

The active-site Schiff-base intermediate with substrate; via pyruvic acid is serine 183. Serine 183 is modified (pyruvic acid (Ser); by autocatalysis).

This sequence belongs to the phosphatidylserine decarboxylase family. PSD-A subfamily. Heterodimer of a large membrane-associated beta subunit and a small pyruvoyl-containing alpha subunit. The cofactor is pyruvate. Is synthesized initially as an inactive proenzyme. Formation of the active enzyme involves a self-maturation process in which the active site pyruvoyl group is generated from an internal serine residue via an autocatalytic post-translational modification. Two non-identical subunits are generated from the proenzyme in this reaction, and the pyruvate is formed at the N-terminus of the alpha chain, which is derived from the carboxyl end of the proenzyme. The post-translation cleavage follows an unusual pathway, termed non-hydrolytic serinolysis, in which the side chain hydroxyl group of the serine supplies its oxygen atom to form the C-terminus of the beta chain, while the remainder of the serine residue undergoes an oxidative deamination to produce ammonia and the pyruvoyl prosthetic group on the alpha chain.

The protein resides in the cell membrane. The enzyme catalyses a 1,2-diacyl-sn-glycero-3-phospho-L-serine + H(+) = a 1,2-diacyl-sn-glycero-3-phosphoethanolamine + CO2. Its pathway is phospholipid metabolism; phosphatidylethanolamine biosynthesis; phosphatidylethanolamine from CDP-diacylglycerol: step 2/2. Catalyzes the formation of phosphatidylethanolamine (PtdEtn) from phosphatidylserine (PtdSer). This is Phosphatidylserine decarboxylase proenzyme from Syntrophus aciditrophicus (strain SB).